The chain runs to 384 residues: Urea transporter 1 (384 aa).

The segment at 1–23 (MDDNPTAVKLDQGGNQAPQGQGR) is disordered. A run of 5 helical transmembrane segments spans residues 61-81 (ISQV…VGLL), 85-105 (PWCA…ALLL), 111-131 (AITA…MAIY), 138-158 (FWWL…FSSA), and 168-188 (LPVF…ATGH). Asparagine 206 carries N-linked (GlcNAc...) asparagine glycosylation. 3 helical membrane-spanning segments follow: residues 237-257 (GGIF…HAAI), 279-299 (GLWG…FMAL), and 327-347 (VVGL…FLLL).

This sequence belongs to the urea transporter family. Homotrimer; each subunit contains a pore through which urea permeates. Identified in a complex with STOM.

It is found in the cell membrane. Its subcellular location is the basolateral cell membrane. It catalyses the reaction urea(in) = urea(out). Its function is as follows. Mediates the transport of urea driven by a concentration gradient across the cell membranes of erythrocytes and the renal inner medullary collecting duct which is critical to the urinary concentrating mechanism. Facilitates water transport in erythrocytes. The sequence is that of Urea transporter 1 (SLC14A1) from Capra hircus (Goat).